A 722-amino-acid polypeptide reads, in one-letter code: MGHWPESKPLKMQEFIVELQPRIKTFEMGGETFTLETGRIARQATGAVLVSTGDTAVLGTVVGAKEPKPGQGFFPLTVNYQEKTYAAGKIPGGFFKREGRPSEKETLTSRLIDRPIRPLFPNGYMNEVQVVLTVMSASKNHDPDIAAMIAASAALAISGIPFDGPIGAARVGYTNEKGYFLNPTFEELSTSLLDMVVAGTDEAVLMVESEAKGLTEDQMLGAVLFGHQEMQTAITAIKEFAAENGKPRWEWQPEAENTELLNAIKAEFGGAIEEAYAIRDKMARYERLGEIKSAAVEKLAGEEEGQPSEEEVKKYFGKVEKSVVRLQVIEGKPRIDGRDNKTVRPIKVEVGVLPSVHGSALFTRGETQAIVTATLGTTRDVQIIDALEGERKDPFLFHYNFPPYSVGEAGRMGSPGRREIGHGRLAKRGVAAVMPTIEEFPYAIRAVSEITESNGSSSMASVCGSSLALMDAGVPLKAPVAGIAMGLVKEGDKFAVLTDILGDEDHLGDMDFKVAGTKEGVTALQMDIKIQGITDEIMEIALEQANAARLHILDEMNKVIAEPRAELSDRAPSITTIKIHPDKIRDVIGKGGATIRGICDETGASIDLDDDGNVKIYADNAAAAQAAVNRVKEITAEIEVGAIYKGRVERIVDFGAFVNILPGKDGLVHISQISERRIENVTDELSEGQEVLVKVLDVDNRGRVKLSMKEVKEGEQPTDFAD.

2 residues coordinate Mg(2+): D505 and D511. The KH domain maps to 572 to 631 (PSITTIKIHPDKIRDVIGKGGATIRGICDETGASIDLDDDGNVKIYADNAAAAQAAVNRV). Residues 641–709 (GAIYKGRVER…NRGRVKLSMK (69 aa)) form the S1 motif domain.

This sequence belongs to the polyribonucleotide nucleotidyltransferase family. Component of the RNA degradosome, which is a multiprotein complex involved in RNA processing and mRNA degradation. Mg(2+) is required as a cofactor.

It localises to the cytoplasm. It carries out the reaction RNA(n+1) + phosphate = RNA(n) + a ribonucleoside 5'-diphosphate. Functionally, involved in mRNA degradation. Catalyzes the phosphorolysis of single-stranded polyribonucleotides processively in the 3'- to 5'-direction. This Marinobacter nauticus (strain ATCC 700491 / DSM 11845 / VT8) (Marinobacter aquaeolei) protein is Polyribonucleotide nucleotidyltransferase.